We begin with the raw amino-acid sequence, 567 residues long: uncharacterized protein (567 aa).

The next 6 membrane-spanning stretches (helical) occupy residues 20 to 40 (FTIL…SGVL), 69 to 89 (SLET…SVFI), 95 to 115 (AYLT…VALI), 126 to 146 (ILLN…FMCL), 168 to 188 (IPLV…YLLF), and 528 to 548 (IFGS…LLAI).

The protein localises to the cell membrane. This is an uncharacterized protein from Escherichia coli (strain K12).